We begin with the raw amino-acid sequence, 490 residues long: Glutamyl-tRNA(Gln) amidotransferase subunit A (490 aa).

Active-site charge relay system residues include Lys79 and Ser154. The Acyl-ester intermediate role is filled by Ser178.

It belongs to the amidase family. GatA subfamily. As to quaternary structure, heterotrimer of A, B and C subunits.

It catalyses the reaction L-glutamyl-tRNA(Gln) + L-glutamine + ATP + H2O = L-glutaminyl-tRNA(Gln) + L-glutamate + ADP + phosphate + H(+). Allows the formation of correctly charged Gln-tRNA(Gln) through the transamidation of misacylated Glu-tRNA(Gln) in organisms which lack glutaminyl-tRNA synthetase. The reaction takes place in the presence of glutamine and ATP through an activated gamma-phospho-Glu-tRNA(Gln). The polypeptide is Glutamyl-tRNA(Gln) amidotransferase subunit A (Roseiflexus castenholzii (strain DSM 13941 / HLO8)).